The primary structure comprises 514 residues: Bifunctional purine biosynthesis protein PurH (514 aa).

An MGS-like domain is found at 1 to 142 (MLALLSVSDK…KNFRHVSVVV (142 aa)).

This sequence belongs to the PurH family.

It catalyses the reaction (6R)-10-formyltetrahydrofolate + 5-amino-1-(5-phospho-beta-D-ribosyl)imidazole-4-carboxamide = 5-formamido-1-(5-phospho-D-ribosyl)imidazole-4-carboxamide + (6S)-5,6,7,8-tetrahydrofolate. It carries out the reaction IMP + H2O = 5-formamido-1-(5-phospho-D-ribosyl)imidazole-4-carboxamide. Its pathway is purine metabolism; IMP biosynthesis via de novo pathway; 5-formamido-1-(5-phospho-D-ribosyl)imidazole-4-carboxamide from 5-amino-1-(5-phospho-D-ribosyl)imidazole-4-carboxamide (10-formyl THF route): step 1/1. The protein operates within purine metabolism; IMP biosynthesis via de novo pathway; IMP from 5-formamido-1-(5-phospho-D-ribosyl)imidazole-4-carboxamide: step 1/1. The polypeptide is Bifunctional purine biosynthesis protein PurH (Myxococcus xanthus (strain DK1622)).